The chain runs to 259 residues: Indole-diterpene biosynthesis cluster protein S (259 aa).

The next 5 helical transmembrane spans lie at 5 to 25, 64 to 84, 87 to 107, 134 to 154, and 221 to 241; these read EASG…GMVW, WFAL…AIIL, VYLI…LWVL, VLWF…AASF, and LGAG…PAAG.

The protein belongs to the ltmS family.

The protein localises to the membrane. Its function is as follows. Part of the gene cluster that mediates the biosynthesis of paspalitrems, indole-diterpene (IDT) mycotoxins that are potent tremorgens in mammals. The geranylgeranyl diphosphate (GGPP) synthase idtG is proposed to catalyze the first step in IDT biosynthesis via catalysis of a series of iterative condensations of isopentenyl diphosphate (IPP) with dimethylallyl diphosphate (DMAPP), geranyl diphosphate (GPP), and farnesyl diphosphate (FPP), to form GGPP. Condensation of indole-3-glycerol phosphate with GGPP by the prenyltransferase idtC then forms 3-geranylgeranylindole (3-GGI). Epoxidation of the two terminal alkenes of the geranylgeranyl moiety by the FAD-dependent monooxygenase idtM, and cyclization by the terpene cyclase idtB then leads to the production of paspaline. The cytochrome P450 monooxygenase idtP then catalyzes oxidative elimination of the pendant methyl group at C-12 of paspaline and generates the C-10 ketone to yield 13-desoxypaxilline. The cytochrome P450 monooxygenase idtQ may catalyze the C-13 oxidation of 13-desoxypaxilline to afford paxilline. Considering that both paspalicine and paxilline were detected in C.paspali, idtQ also catalyzes the formation of paspalinine from 13-desoxypaxilline via paspalicine as an intermediate. Finally, the alpha-prenyltransferase idtF prenylates paspalinine at the C-20 or the C-21 positions to yield paspalitrems A and C, respectively. The hydroxylation of paspalitrem A at C-32 by a still unknown oxidase affords paspalitrem B. This Claviceps paspali (Rye ergot fungus) protein is Indole-diterpene biosynthesis cluster protein S.